Consider the following 2000-residue polypeptide: MAQALLVPPGPESFRLFTRESLAAIEKRAAEEKAKKPKKEQDNDDENKPKPNSDLEAGKNLPFIYGDIPPEMVSEPLEDLDPYYINKKTFIVMNKGKAIFRFSATSALYILTPLNPVRKIAIKILVHSLFSMLIMCTILTNCVFMTLSNPPDWTKNVEYTFTGIYTFESLIKILARGFCLEDFTFLRDPWNWLDFSVIVMAYVTEFVSLGNVSALRTFRVLRALKTISVIPGLKTIVGALIQSVKKLSDVMILTVFCLSVFALIGLQLFMGNLRNKCLQWPPSDSAFETNTTSYFNGTMDSNGTFVNVTMSTFNWKDYIGDDSHFYVLDGQKDPLLCGNGSDAGQCPEGYICVKAGRNPNYGYTSFDTFSWAFLSLFRLMTQDYWENLYQLTLRAAGKTYMIFFVLVIFLGSFYLVNLILAVVAMAYEEQNQATLEEAEQKEAEFQQMLEQLKKQQEEAQAVAAASAASRDFSGIGGLGELLESSSEASKLSSKSAKEWRNRRKKRRQREHLEGNNKGERDSFPKSESEDSVKRSSFLFSMDGNRLTSDKKFCSPHQSLLSIRGSLFSPRRNSKTSIFSFRGRAKDVGSENDFADDEHSTFEDSESRRDSLFVPHRHGERRNSNVSQASMSSRMVPGLPANGKMHSTVDCNGVVSLVGGPSALTSPTGQLPPEGTTTETEVRKRRLSSYQISMEMLEDSSGRQRAVSIASILTNTMEELEESRQKCPPCWYRFANVFLIWDCCDAWLKVKHLVNLIVMDPFVDLAITICIVLNTLFMAMEHYPMTEQFSSVLTVGNLVFTGIFTAEMVLKIIAMDPYYYFQEGWNIFDGIIVSLSLMELGLSNVEGLSVLRSFRLLRVFKLAKSWPTLNMLIKIIGNSVGALGNLTLVLAIIVFIFAVVGMQLFGKSYKECVCKINDDCTLPRWHMNDFFHSFLIVFRVLCGEWIETMWDCMEVAGQTMCLIVFMLVMVIGNLVVLNLFLALLLSSFSSDNLAATDDDNEMNNLQIAVGRMQKGIDYVKNKMRECFQKAFFRKPKVIEIHEGNKIDSCMSNNTGIEISKELNYLRDGNGTTSGVGTGSSVEKYVIDENDYMSFINNPSLTVTVPIAVGESDFENLNTEEFSSESELEESKEKLNATSSSEGSTVDVVLPREGEQAETEPEEDLKPEACFTEGCIKKFPFCQVSTEEGKGKIWWNLRKTCYSIVEHNWFETFIVFMILLSSGALAFEDIYIEQRKTIKTMLEYADKVFTYIFILEMLLKWVAYGFQTYFTNAWCWLDFLIVDVSLVSLVANALGYSELGAIKSLRTLRALRPLRALSRFEGMRVVVNALVGAIPSIMNVLLVCLIFWLIFSIMGVNLFAGKFYHCVNMTTGNMFDISDVNNLSDCQALGKQARWKNVKVNFDNVGAGYLALLQVATFKGWMDIMYAAVDSRDVKLQPVYEENLYMYLYFVIFIIFGSFFTLNLFIGVIIDNFNQQKKKFGGQDIFMTEEQKKYYNAMKKLGSKKPQKPIPRPANKFQGMVFDFVTRQVFDISIMILICLNMVTMMVETDDQGKYMTLVLSRINLVFIVLFTGEFVLKLVSLRHYYFTIGWNIFDFVVVILSIVGMFLAEMIEKYFVSPTLFRVIRLARIGRILRLIKGAKGIRTLLFALMMSLPALFNIGLLLFLVMFIYAIFGMSNFAYVKKEAGIDDMFNFETFGNSMICLFQITTSAGWDGLLAPILNSAPPDCDPDTIHPGSSVKGDCGNPSVGIFFFVSYIIISFLVVVNMYIAVILENFSVATEESAEPLSEDDFEMFYEVWEKFDPDATQFIEFSKLSDFAAALDPPLLIAKPNKVQLIAMDLPMVSGDRIHCLDILFAFTKRVLGESGEMDALRIQMEDRFMASNPSKVSYEPITTTLKRKQEEVSAAIIQRNFRCYLLKQRLKNISSNYNKEAIKGRIDLPIKQDMIIDKLNGNSTPEKTDGSSSTTSPPSYDSVTKPDKEKFEKDKPEKESKGKEVRENQK.

Topologically, residues 1-128 (MAQALLVPPG…KIAIKILVHS (128 aa)) are cytoplasmic. A disordered region spans residues 28–60 (RAAEEKAKKPKKEQDNDDENKPKPNSDLEAGKN). A compositionally biased stretch (basic and acidic residues) spans 46 to 57 (ENKPKPNSDLEA). Residues 110 to 455 (ILTPLNPVRK…QQMLEQLKKQ (346 aa)) form an I repeat. Residues 129 to 146 (LFSMLIMCTILTNCVFMT) form a helical membrane-spanning segment. Topologically, residues 147–152 (LSNPPD) are extracellular. A helical transmembrane segment spans residues 153–174 (WTKNVEYTFTGIYTFESLIKIL). Topologically, residues 175 to 188 (ARGFCLEDFTFLRD) are cytoplasmic. The helical transmembrane segment at 189–206 (PWNWLDFSVIVMAYVTEF) threads the bilayer. Residues 207–213 (VSLGNVS) are Extracellular-facing. Asn-211 carries an N-linked (GlcNAc...) asparagine glycan. Residues 214–235 (ALRTFRVLRALKTISVIPGLKT) form a helical membrane-spanning segment. Residues 236-249 (IVGALIQSVKKLSD) lie on the Cytoplasmic side of the membrane. The chain crosses the membrane as a helical span at residues 250–269 (VMILTVFCLSVFALIGLQLF). Residues 270–369 (MGNLRNKCLQ…NYGYTSFDTF (100 aa)) are Extracellular-facing. 5 N-linked (GlcNAc...) asparagine glycosylation sites follow: Asn-290, Asn-296, Asn-302, Asn-307, and Asn-339. Positions 370-386 (SWAFLSLFRLMTQDYWE) form an intramembrane region, pore-forming. Residues 387-397 (NLYQLTLRAAG) are Extracellular-facing. The chain crosses the membrane as a helical span at residues 398–424 (KTYMIFFVLVIFLGSFYLVNLILAVVA). Residues 425-761 (MAYEEQNQAT…LVNLIVMDPF (337 aa)) are Cytoplasmic-facing. Phosphoserine occurs at positions 484, 485, and 486. Disordered stretches follow at residues 493-528 (SKSA…KSES), 587-631 (VGSE…ASMS), and 662-681 (ALTS…ETEV). The span at 500 to 509 (RNRRKKRRQR) shows a compositional bias: basic residues. 2 stretches are compositionally biased toward basic and acidic residues: residues 510–528 (EHLE…KSES) and 596–610 (DEHS…RRDS). Residues 662-678 (ALTSPTGQLPPEGTTTE) are compositionally biased toward polar residues. One copy of the II repeat lies at 742–1014 (CCDAWLKVKH…QIAVGRMQKG (273 aa)). A helical transmembrane segment spans residues 762-779 (VDLAITICIVLNTLFMAM). Residues 780 to 787 (EHYPMTEQ) lie on the Extracellular side of the membrane. The helical transmembrane segment at 788 to 812 (FSSVLTVGNLVFTGIFTAEMVLKII) threads the bilayer. Topologically, residues 813 to 822 (AMDPYYYFQE) are cytoplasmic. Residues 823 to 842 (GWNIFDGIIVSLSLMELGLS) form a helical membrane-spanning segment. At 843–846 (NVEG) the chain is on the extracellular side. A helical transmembrane segment spans residues 847-865 (LSVLRSFRLLRVFKLAKSW). At 866–883 (PTLNMLIKIIGNSVGALG) the chain is on the cytoplasmic side. A helical membrane pass occupies residues 884–904 (NLTLVLAIIVFIFAVVGMQLF). Topologically, residues 905-929 (GKSYKECVCKINDDCTLPRWHMNDF) are extracellular. A disulfide bridge links Cys-913 with Cys-919. Residues 930–945 (FHSFLIVFRVLCGEWI) constitute an intramembrane region (pore-forming). Topologically, residues 946–956 (ETMWDCMEVAG) are extracellular. A disulfide bond links Cys-951 and Cys-960. Residues 957–983 (QTMCLIVFMLVMVIGNLVVLNLFLALL) form a helical membrane-spanning segment. Topologically, residues 984 to 1205 (LSSFSSDNLA…RKTCYSIVEH (222 aa)) are cytoplasmic. The segment at 1118–1162 (EEFSSESELEESKEKLNATSSSEGSTVDVVLPREGEQAETEPEED) is disordered. One copy of the III repeat lies at 1188–1499 (KGKIWWNLRK…KKYYNAMKKL (312 aa)). Residues 1206–1226 (NWFETFIVFMILLSSGALAFE) form a helical membrane-spanning segment. Topologically, residues 1227–1238 (DIYIEQRKTIKT) are extracellular. Residues 1239 to 1260 (MLEYADKVFTYIFILEMLLKWV) form a helical membrane-spanning segment. At 1261-1266 (AYGFQT) the chain is on the cytoplasmic side. The helical transmembrane segment at 1267–1292 (YFTNAWCWLDFLIVDVSLVSLVANAL) threads the bilayer. Residues 1293–1301 (GYSELGAIK) are Extracellular-facing. The helical transmembrane segment at 1302–1320 (SLRTLRALRPLRALSRFEG) threads the bilayer. Over 1321 to 1333 (MRVVVNALVGAIP) the chain is Cytoplasmic. A helical transmembrane segment spans residues 1334–1356 (SIMNVLLVCLIFWLIFSIMGVNL). Topologically, residues 1357 to 1402 (FAGKFYHCVNMTTGNMFDISDVNNLSDCQALGKQARWKNVKVNFDN) are extracellular. Residues Cys-1364 and Cys-1384 are joined by a disulfide bond. Residues Asn-1366 and Asn-1380 are each glycosylated (N-linked (GlcNAc...) asparagine). Positions 1403–1419 (VGAGYLALLQVATFKGW) form an intramembrane region, pore-forming. At 1420 to 1442 (MDIMYAAVDSRDVKLQPVYEENL) the chain is on the extracellular side. Residues 1443-1468 (YMYLYFVIFIIFGSFFTLNLFIGVII) form a helical membrane-spanning segment. Residues 1469–1526 (DNFNQQKKKFGGQDIFMTEEQKKYYNAMKKLGSKKPQKPIPRPANKFQGMVFDFVTRQ) lie on the Cytoplasmic side of the membrane. A Phosphoserine; by PKC modification is found at Ser-1501. The IV repeat unit spans residues 1508–1806 (IPRPANKFQG…WEKFDPDATQ (299 aa)). A helical membrane pass occupies residues 1527–1545 (VFDISIMILICLNMVTMMV). Topologically, residues 1546 to 1553 (ETDDQGKY) are extracellular. Residues 1554 to 1577 (MTLVLSRINLVFIVLFTGEFVLKL) form a helical membrane-spanning segment. At 1578–1587 (VSLRHYYFTI) the chain is on the cytoplasmic side. Residues 1588–1605 (GWNIFDFVVVILSIVGMF) traverse the membrane as a helical segment. The Extracellular portion of the chain corresponds to 1606–1617 (LAEMIEKYFVSP). The chain crosses the membrane as a helical span at residues 1618–1640 (TLFRVIRLARIGRILRLIKGAKG). Residues 1641 to 1653 (IRTLLFALMMSLP) are Cytoplasmic-facing. The helical transmembrane segment at 1654–1677 (ALFNIGLLLFLVMFIYAIFGMSNF) threads the bilayer. The Extracellular segment spans residues 1678-1699 (AYVKKEAGIDDMFNFETFGNSM). The segment at residues 1700–1712 (ICLFQITTSAGWD) is an intramembrane region (pore-forming). Residues 1713–1744 (GLLAPILNSAPPDCDPDTIHPGSSVKGDCGNP) are Extracellular-facing. The chain crosses the membrane as a helical span at residues 1745–1770 (SVGIFFFVSYIIISFLVVVNMYIAVI). The Cytoplasmic segment spans residues 1771 to 2000 (LENFSVATEE…KGKEVRENQK (230 aa)). The IQ domain occupies 1900 to 1929 (EEVSAAIIQRNFRCYLLKQRLKNISSNYNK). Residues 1949-2000 (LNGNSTPEKTDGSSSTTSPPSYDSVTKPDKEKFEKDKPEKESKGKEVRENQK) are disordered. Residues 1974 to 2000 (TKPDKEKFEKDKPEKESKGKEVRENQK) are compositionally biased toward basic and acidic residues.

This sequence belongs to the sodium channel (TC 1.A.1.10) family. Nav1.3/SCN3A subfamily. In terms of assembly, heterooligomer of an alpha subunit, SCN3A, and 1 to 3 regulatory beta subunits including SCN1B and SCN2B; disulfide-linked with some beta subunits like SCN2B. Interacts with NEDD4L; could regulate expression of SCN3A at the plasma membrane through ubiquitination-regulated endocytosis. Interacts with the conotoxin GVIIJ. May be ubiquitinated by NEDD4L; which would promote its endocytosis. In terms of processing, phosphorylation at Ser-1501 by PKC in a highly conserved cytoplasmic loop slows inactivation of the sodium channel and reduces peak sodium currents. As to expression, expressed in enterochromaffin cells in both colon and small bowel (at protein level).

It localises to the cell membrane. It is found in the basal cell membrane. The catalysed reaction is Na(+)(in) = Na(+)(out). Its function is as follows. Pore-forming subunit of Nav1.3, a voltage-gated sodium (Nav) channel that directly mediates the depolarizing phase of action potentials in excitable membranes. Navs, also called VGSCs (voltage-gated sodium channels) or VDSCs (voltage-dependent sodium channels), operate by switching between closed and open conformations depending on the voltage difference across the membrane. In the open conformation they allow Na(+) ions to selectively pass through the pore, along their electrochemical gradient. The influx of Na+ ions provokes membrane depolarization, initiating the propagation of electrical signals throughout cells and tissues. In some secretory cell types, it also participates in cell excitability through membrane depolarization and regulates cells responsiveness to stimuli triggering secretion. For instance, it controls the release of serotonin/5-hydroxytryptamine by enterochromaffin cells and is required for both glucagon- and glucose-induced insulin secretion in pancreatic endocrine cells. This chain is Sodium channel protein type 3 subunit alpha, found in Homo sapiens (Human).